Here is a 198-residue protein sequence, read N- to C-terminus: GTP cyclohydrolase-2 (198 aa).

52–56 (RMHSE) serves as a coordination point for GTP. Zn(2+) is bound by residues Cys57, Cys68, and Cys70. GTP-binding positions include Gln73, 94–96 (EGR), and Thr116. Asp128 (proton acceptor) is an active-site residue. The active-site Nucleophile is Arg130. Positions 151 and 156 each coordinate GTP.

The protein belongs to the GTP cyclohydrolase II family. The cofactor is Zn(2+).

The catalysed reaction is GTP + 4 H2O = 2,5-diamino-6-hydroxy-4-(5-phosphoribosylamino)-pyrimidine + formate + 2 phosphate + 3 H(+). Its pathway is cofactor biosynthesis; riboflavin biosynthesis; 5-amino-6-(D-ribitylamino)uracil from GTP: step 1/4. Catalyzes the conversion of GTP to 2,5-diamino-6-ribosylamino-4(3H)-pyrimidinone 5'-phosphate (DARP), formate and pyrophosphate. The protein is GTP cyclohydrolase-2 of Vibrio cholerae serotype O1 (strain ATCC 39315 / El Tor Inaba N16961).